Here is a 1081-residue protein sequence, read N- to C-terminus: Serine/threonine-protein kinase PKH2 (1081 aa).

Phosphoserine is present on S138. Residues 179–443 (FKFGSVIGDG…ISQIKEHHFF (265 aa)) enclose the Protein kinase domain. ATP contacts are provided by residues 189-191 (AYS) and K208. A PIF-pocket region spans residues 210–255 (LNKEYLIRQKKVKYVSIEKTALQKLNNSPSVVRLFSTFQDESSLYF). ATP-binding positions include 258–260 (EYA) and D264. D303 (proton acceptor) is an active-site residue. Residues E307 and D321 each coordinate ATP. The segment covering 494 to 526 (HLVTQRSASSPSVEETTHSTLYNNNTHASTESE) has biased composition (polar residues). Disordered regions lie at residues 494-652 (HLVT…TYQM), 805-833 (NRSGEGYKCNQNSSPMKDDDKSESNNKGS), and 970-1017 (IERR…INSA). Residues 527–538 (ISIKKRPTDERT) show a composition bias toward basic and acidic residues. Low complexity-rich tracts occupy residues 564-575 (AASAALAASAAL) and 582-602 (SYPTSSSKSSRSSSPATTSRP). Position 619 is a phosphoserine (S619). Residues 632-645 (PMPPYTPPMSPPMT) are compositionally biased toward pro residues. Polar residues-rich tracts occupy residues 805–819 (NRSGEGYKCNQNSSP) and 998–1017 (HSQSPSISKHNSFSESINSA). The residue at position 1009 (S1009) is a Phosphoserine.

This sequence belongs to the protein kinase superfamily. AGC Ser/Thr protein kinase family. PDPK1 subfamily.

It localises to the nucleus. The protein localises to the cytoplasm. Its subcellular location is the cell cortex. It carries out the reaction L-seryl-[protein] + ATP = O-phospho-L-seryl-[protein] + ADP + H(+). It catalyses the reaction L-threonyl-[protein] + ATP = O-phospho-L-threonyl-[protein] + ADP + H(+). With respect to regulation, sphingoid base activates kinase activity. Serine/threonine-protein kinase which is part sphingolipid-mediated signaling pathway that is required for the internalization step of endocytosis by regulating eisosome assembly and organization, and modulating the organization of the plasma membrane. Phosphorylates and activates PKC1. Activates YPK1 and YPK2, 2 components of signaling cascade required for maintenance of cell wall integrity. Required for stress-induced P-body assembly and regulates global mRNA decay at the deadenylation step. The sequence is that of Serine/threonine-protein kinase PKH2 (PKH2) from Saccharomyces cerevisiae (strain ATCC 204508 / S288c) (Baker's yeast).